The following is a 221-amino-acid chain: MSYGRPPPDVEGMTSLKVDNLTYRTSPDTLRRVFEKYGRVGDVYIPRDRYTKESRGFAFVRFHDKRDAEDAMDAMDGAVLDGRELRVQMARYGRPPDSHHSRRGPPPRRYGGGGYGRRSRSPRRRRRSRSRSRSRSRSRSRSRYSRSKSRSRTRSRSRSTSKSRSARRSKSKSSSVSRSRSRSRSRSRSRSPPPVSKRESKSRSRSKSPPKSPEEEGAVSS.

Residue Ser2 is modified to N-acetylserine. The residue at position 2 (Ser2) is a Phosphoserine. Residues Thr14–Tyr92 enclose the RRM domain. Residues Thr22 and Thr25 each carry the phosphothreonine modification. Ser26 bears the Phosphoserine mark. At Lys52 the chain carries N6-acetyllysine. The segment at Tyr92–Ser221 is disordered. Basic residues-rich tracts occupy residues Arg117 to Ser171 and Ser179 to Ser189. A phosphoserine mark is found at Ser189, Ser191, Ser204, Ser206, Ser208, Ser212, and Ser220.

This sequence belongs to the splicing factor SR family. As to quaternary structure, interacts with CCNL1 and CCNL2. Interacts with SCAF11. Interacts with ZRSR2/U2AF1-RS2. Interacts with CCDC55 (via C-terminus). In vitro, self-associates and binds SRSF1/SFRS1 (ASF/SF2), SNRNP70 and U2AF1 but not U2AF2. Binds SREK1/SFRS12. Interacts with BRDT. In terms of processing, extensively phosphorylated on serine residues in the RS domain. Phosphorylated by SRPK2 and this causes its redistribution from the nuclear speckle to nucleoplasm and controls cell fate decision in response to cisplatin treatment. KAT5/TIP60 inhibits its phosphorylation by preventing SRPK2 nuclear translocation. Acetylation on Lys-52 by KAT5/TIP60 promotes its proteasomal degradation. This effect is counterbalanced by HDAC6, which positively controls SRSF2 protein level by deacetylating it and preventing its proteasomal degradation. In terms of tissue distribution, expressed in all the tissues examined; liver, kidney, spleen, heart, lung and brain.

The protein resides in the nucleus. Its subcellular location is the nucleoplasm. It is found in the nucleus speckle. Functionally, necessary for the splicing of pre-mRNA. It is required for formation of the earliest ATP-dependent splicing complex and interacts with spliceosomal components bound to both the 5'- and 3'-splice sites during spliceosome assembly. It also is required for ATP-dependent interactions of both U1 and U2 snRNPs with pre-mRNA. Can bind to the myelin basic protein (MBP) gene MB3 regulatory region and increase transcription of the mbp promoter in cells derived from the CNS. The phosphorylated form (by SRPK2) is required for cellular apoptosis in response to cisplatin treatment. This Mus musculus (Mouse) protein is Serine/arginine-rich splicing factor 2 (Srsf2).